Reading from the N-terminus, the 707-residue chain is Glucose starvation modulator protein 1 (707 aa).

Residues 20-48 (CTFCHQKHLQCSNERPCKNCVKRNIADQC) constitute a DNA-binding region (zn(2)-C6 fungal-type). 4 disordered regions span residues 63-122 (NSKA…PNDL), 154-188 (QPTH…PPES), 260-283 (DQQQ…GPSH), and 385-404 (NVSS…SAIA). 2 stretches are compositionally biased toward low complexity: residues 66–79 (AVAA…TTTT) and 91–104 (SPSI…ISPI). 2 stretches are compositionally biased toward polar residues: residues 105-114 (NTSTFDTNGH) and 154-172 (QPTH…QVQP). The segment covering 178 to 188 (SSVPPSAPPES) has biased composition (low complexity). The span at 260–274 (DQQQSSSEATGTSAS) shows a compositional bias: polar residues. Positions 522–591 (DYEKLSQLNS…FQLFKSVAVG (70 aa)) constitute a PAS domain. A compositionally biased stretch (low complexity) spans 621–652 (NYNNNYNHNYSHNNNNNNNSNNSNNNGMSTGA). A disordered region spans residues 621-659 (NYNNNYNHNYSHNNNNNNNSNNSNNNGMSTGAGNSGDGD).

This sequence belongs to the ERT1/acuK family.

The protein resides in the nucleus. Its function is as follows. Transcription factor which regulates nonfermentable carbon utilization. The chain is Glucose starvation modulator protein 1 (GSM1) from Lodderomyces elongisporus (strain ATCC 11503 / CBS 2605 / JCM 1781 / NBRC 1676 / NRRL YB-4239) (Yeast).